A 115-amino-acid polypeptide reads, in one-letter code: Large ribosomal subunit protein bL19 (115 aa).

This sequence belongs to the bacterial ribosomal protein bL19 family.

In terms of biological role, this protein is located at the 30S-50S ribosomal subunit interface and may play a role in the structure and function of the aminoacyl-tRNA binding site. The protein is Large ribosomal subunit protein bL19 of Wigglesworthia glossinidia brevipalpis.